The sequence spans 340 residues: DNA-directed RNA polymerase subunit alpha (340 aa).

Residues 1–233 are alpha N-terminal domain (alpha-NTD); it reads MYKNWRDLIR…EQLSIFINFD (233 aa). Positions 246–340 are alpha C-terminal domain (alpha-CTD); the sequence is DEIDKINENL…RLRGEQNEEE (95 aa).

Belongs to the RNA polymerase alpha chain family. Homodimer. The RNAP catalytic core consists of 2 alpha, 1 beta, 1 beta' and 1 omega subunit. When a sigma factor is associated with the core the holoenzyme is formed, which can initiate transcription.

The enzyme catalyses RNA(n) + a ribonucleoside 5'-triphosphate = RNA(n+1) + diphosphate. In terms of biological role, DNA-dependent RNA polymerase catalyzes the transcription of DNA into RNA using the four ribonucleoside triphosphates as substrates. The sequence is that of DNA-directed RNA polymerase subunit alpha from Pelobacter propionicus (strain DSM 2379 / NBRC 103807 / OttBd1).